The primary structure comprises 75 residues: Beta-defensin 42 (75 aa).

The first 21 residues, 1–21 (MNLRLSCLLFILVTSLPAGRC), serve as a signal peptide directing secretion. Intrachain disulfides connect cysteine 33/cysteine 60, cysteine 40/cysteine 54, and cysteine 44/cysteine 61.

It belongs to the beta-defensin family. Epididymis-specific, with highest levels in the initial segment and distal caput.

Its subcellular location is the secreted. Functionally, has bactericidal activity. May play a role in the antimicrobial protection of sperm and urogenital tract epithelia. The polypeptide is Beta-defensin 42 (Mus musculus (Mouse)).